Here is a 205-residue protein sequence, read N- to C-terminus: MLHITDTAQKYLIKLLSYQKKSTQIRFSVKNPGTPHAQCNISYYLPKTHHNSKDIEIKFSQFSIYLEKHLIPFIQKTTIDIVSNDLGIQLSIKSPNLYHSKNDNHVNNTQNNINYKSPTLENQIKHILTHQINPQLAMHGGSVSLVKITSDSIAILKFHGGCNGCAMAFYTIKEGIEKTLKKLCPELNGVIDSTQHQPGTHSFFK.

[4Fe-4S] cluster contacts are provided by C162 and C165.

The protein belongs to the NfuA family. As to quaternary structure, homodimer. [4Fe-4S] cluster serves as cofactor.

In terms of biological role, involved in iron-sulfur cluster biogenesis. Binds a 4Fe-4S cluster, can transfer this cluster to apoproteins, and thereby intervenes in the maturation of Fe/S proteins. Could also act as a scaffold/chaperone for damaged Fe/S proteins. This Blochmanniella floridana protein is Fe/S biogenesis protein NfuA.